The sequence spans 197 residues: Probable calcium-binding protein CML21 (197 aa).

The disordered stretch occupies residues 1-33 (MLRPPPPSSVLTASAAAARPPASVVQPQRQAAH). The span at 9–30 (SVLTASAAAARPPASVVQPQRQ) shows a compositional bias: low complexity. EF-hand domains are found at residues 37 to 72 (AETL…LGAR), 126 to 161 (EKEA…MGLP), and 164 to 197 (ACMA…AAGN). Positions 50, 52, 54, 61, 139, 141, 143, 145, 150, 177, 179, 181, 183, and 188 each coordinate Ca(2+).

Its function is as follows. Potential calcium sensor. The chain is Probable calcium-binding protein CML21 (CML21) from Oryza sativa subsp. japonica (Rice).